Reading from the N-terminus, the 452-residue chain is Glycine receptor subunit alpha-2 (452 aa).

An N-terminal signal peptide occupies residues 1-27; the sequence is MNRQLVNILTALFAFFLETNHFRTAFC. The Extracellular portion of the chain corresponds to 28–256; it reads KDHDSRSGKQ…KFHLERQMGY (229 aa). An N-linked (GlcNAc...) asparagine glycan is attached at Asn72. Position 99 (Arg99) interacts with glycine. Residue Arg99 coordinates strychnine. The N-linked (GlcNAc...) asparagine glycan is linked to Asn103. Residue Ser163 participates in glycine binding. Cysteines 172 and 186 form a disulfide. 2 residues coordinate Zn(2+): Glu226 and Glu228. A disulfide bridge connects residues Cys232 and Cys243. Thr238 is a binding site for glycine. Zn(2+) is bound at residue His249. Residues 257–278 traverse the membrane as a helical segment; that stretch reads YLIQMYIPSLLIVILSWVSFWI. Residues 279-283 lie on the Cytoplasmic side of the membrane; the sequence is NMDAA. Residues 284–304 traverse the membrane as a helical segment; it reads PARVALGITTVLTMTTQSSGS. Over 305–315 the chain is Extracellular; it reads RASLPKVSYVK. A helical transmembrane segment spans residues 316–336; the sequence is AIDIWMAVCLLFVFAALLEYA. The Cytoplasmic segment spans residues 337–420; that stretch reads AVNFVSRQHK…FVDRAKRIDT (84 aa). A helical transmembrane segment spans residues 421 to 441; the sequence is ISRAAFPLAFLIFNIFYWITY. Residues 442 to 452 are Extracellular-facing; it reads KIIRHEDVHKK.

This sequence belongs to the ligand-gated ion channel (TC 1.A.9) family. Glycine receptor (TC 1.A.9.3) subfamily. GLRA2 sub-subfamily. Interacts with GLRB. Heteropentamer composed of GLRA2 and GLRB. Functional GLRB-GLRA2 heteropentamers contain four GLRA2 subunits and one GLRB subunit, although alternative subunit composition cannot be excluded. Homopentamer (in vitro). Both homopentamers and heteropentamers form functional ion channels, but their characteristics are subtly different.

It localises to the postsynaptic cell membrane. It is found in the synapse. The protein localises to the cell membrane. Its subcellular location is the cell projection. It carries out the reaction chloride(in) = chloride(out). Its activity is regulated as follows. Channel opening is triggered by extracellular glycine. Channel opening is also triggered by taurine and beta-alanine. Inhibited by strychnine. Inhibited by picrotoxin. Channel activity is potentiated by 10-100 uM Zn(2+). Channel activity is marginally increased by 50 mM ethanol; it is strongly increased by a combination of 0.5 uM Zn(2+) and 50 mM ethanol. Channel activity is inhibited by 100-1000 uM Zn(2+). Functionally, subunit of heteromeric glycine-gated chloride channels. Plays a role in synaptic plasticity. Contributes to the generation of inhibitory postsynaptic currents, and is involved in the down-regulation of neuronal excitability. Plays a role in cellular responses to ethanol. This is Glycine receptor subunit alpha-2 from Homo sapiens (Human).